We begin with the raw amino-acid sequence, 562 residues long: NAD-dependent malic enzyme (562 aa).

Tyr101 functions as the Proton donor in the catalytic mechanism. Position 154 (Arg154) interacts with NAD(+). Lys172 functions as the Proton acceptor in the catalytic mechanism. Glu243, Asp244, and Asp267 together coordinate a divalent metal cation. Asp267 and Asn415 together coordinate NAD(+).

This sequence belongs to the malic enzymes family. As to quaternary structure, homotetramer. The cofactor is Mg(2+). Requires Mn(2+) as cofactor.

The enzyme catalyses (S)-malate + NAD(+) = pyruvate + CO2 + NADH. The catalysed reaction is oxaloacetate + H(+) = pyruvate + CO2. The sequence is that of NAD-dependent malic enzyme from Shewanella putrefaciens (strain CN-32 / ATCC BAA-453).